A 761-amino-acid polypeptide reads, in one-letter code: 5-methyltetrahydropteroyltriglutamate--homocysteine methyltransferase (761 aa).

Residues 16–19 (RELK) and Lys116 each bind 5-methyltetrahydropteroyltri-L-glutamate. L-homocysteine-binding positions include 435–437 (IGS) and Glu488. L-methionine-binding positions include 435-437 (IGS) and Glu488. Residues 519 to 520 (RC) and Trp565 contribute to the 5-methyltetrahydropteroyltri-L-glutamate site. Asp603 lines the L-homocysteine pocket. Asp603 lines the L-methionine pocket. Glu609 is a 5-methyltetrahydropteroyltri-L-glutamate binding site. Zn(2+) contacts are provided by His645, Cys647, and Glu669. His698 acts as the Proton donor in catalysis. Cys730 lines the Zn(2+) pocket.

This sequence belongs to the vitamin-B12 independent methionine synthase family. The cofactor is Zn(2+).

The enzyme catalyses 5-methyltetrahydropteroyltri-L-glutamate + L-homocysteine = tetrahydropteroyltri-L-glutamate + L-methionine. Its pathway is amino-acid biosynthesis; L-methionine biosynthesis via de novo pathway; L-methionine from L-homocysteine (MetE route): step 1/1. Functionally, catalyzes the transfer of a methyl group from 5-methyltetrahydrofolate to homocysteine resulting in methionine formation. The polypeptide is 5-methyltetrahydropteroyltriglutamate--homocysteine methyltransferase (Hahella chejuensis (strain KCTC 2396)).